Here is a 178-residue protein sequence, read N- to C-terminus: MKLKSVLLDEKAVNRTLIRISHEIIERNKGIDELVLLGIKTRGYPLAKRIASYIKGIEGVDVPVGSVDITLYRDDLTKISEDLEIKNLDLGLEIKDKKIIIIDDVLYTCRTARAAIDAIMDVNRPRGIQLAVLIDRGHKELPIRADYVGKNIPTSKNEVIAVSLKEIDGEDSVKIFDK.

The PRPP-binding signature appears at 99 to 111 (IIIIDDVLYTCRT).

The protein belongs to the purine/pyrimidine phosphoribosyltransferase family. PyrR subfamily. In terms of assembly, homodimer and homohexamer; in equilibrium.

The enzyme catalyses UMP + diphosphate = 5-phospho-alpha-D-ribose 1-diphosphate + uracil. In terms of biological role, regulates transcriptional attenuation of the pyrimidine nucleotide (pyr) operon by binding in a uridine-dependent manner to specific sites on pyr mRNA. This disrupts an antiterminator hairpin in the RNA and favors formation of a downstream transcription terminator, leading to a reduced expression of downstream genes. Also displays a weak uracil phosphoribosyltransferase activity which is not physiologically significant. In Clostridium beijerinckii (strain ATCC 51743 / NCIMB 8052) (Clostridium acetobutylicum), this protein is Bifunctional protein PyrR.